A 563-amino-acid polypeptide reads, in one-letter code: Dihydroxy-acid dehydratase (563 aa).

Cysteine 50 contacts [2Fe-2S] cluster. Aspartate 82 provides a ligand contact to Mg(2+). Cysteine 123 is a [2Fe-2S] cluster binding site. The Mg(2+) site is built by aspartate 124 and lysine 125. An N6-carboxylysine modification is found at lysine 125. Cysteine 195 serves as a coordination point for [2Fe-2S] cluster. Glutamate 447 is a Mg(2+) binding site. Serine 473 (proton acceptor) is an active-site residue.

Belongs to the IlvD/Edd family. As to quaternary structure, homodimer. [2Fe-2S] cluster is required as a cofactor. It depends on Mg(2+) as a cofactor.

The enzyme catalyses (2R)-2,3-dihydroxy-3-methylbutanoate = 3-methyl-2-oxobutanoate + H2O. It catalyses the reaction (2R,3R)-2,3-dihydroxy-3-methylpentanoate = (S)-3-methyl-2-oxopentanoate + H2O. The protein operates within amino-acid biosynthesis; L-isoleucine biosynthesis; L-isoleucine from 2-oxobutanoate: step 3/4. It functions in the pathway amino-acid biosynthesis; L-valine biosynthesis; L-valine from pyruvate: step 3/4. Functionally, functions in the biosynthesis of branched-chain amino acids. Catalyzes the dehydration of (2R,3R)-2,3-dihydroxy-3-methylpentanoate (2,3-dihydroxy-3-methylvalerate) into 2-oxo-3-methylpentanoate (2-oxo-3-methylvalerate) and of (2R)-2,3-dihydroxy-3-methylbutanoate (2,3-dihydroxyisovalerate) into 2-oxo-3-methylbutanoate (2-oxoisovalerate), the penultimate precursor to L-isoleucine and L-valine, respectively. This chain is Dihydroxy-acid dehydratase, found in Nostoc sp. (strain PCC 7120 / SAG 25.82 / UTEX 2576).